Reading from the N-terminus, the 526-residue chain is Peptide chain release factor 3 (526 aa).

The region spanning 9–277 is the tr-type G domain; it reads DKRRTFAIIS…GIVEWAPKPQ (269 aa). GTP contacts are provided by residues 18 to 25, 86 to 90, and 140 to 143; these read SHPDAGKT, DTPGH, and NKLD.

The protein belongs to the TRAFAC class translation factor GTPase superfamily. Classic translation factor GTPase family. PrfC subfamily.

The protein resides in the cytoplasm. Its function is as follows. Increases the formation of ribosomal termination complexes and stimulates activities of RF-1 and RF-2. It binds guanine nucleotides and has strong preference for UGA stop codons. It may interact directly with the ribosome. The stimulation of RF-1 and RF-2 is significantly reduced by GTP and GDP, but not by GMP. This Shewanella woodyi (strain ATCC 51908 / MS32) protein is Peptide chain release factor 3.